Reading from the N-terminus, the 281-residue chain is sn-glycerol-3-phosphate transport system permease protein UgpE (281 aa).

Transmembrane regions (helical) follow at residues 16 to 36, 85 to 105, 113 to 133, 142 to 162, 202 to 222, and 247 to 267; these read LILGIAVILFPLYVAFVAATL, FSITLGKITVSMLSAFAIVWF, FFWMIFITLMLPVEVRIFPTV, LDSYAGLTLPLMASATATFLF, ALFVITFIYGWNQYLWPLLII, and WNSVMAAMLLTLIPPVVIVLV. Positions 77-268 constitute an ABC transmembrane type-1 domain; it reads LLNSFVMAFS…IPPVVIVLVM (192 aa).

It belongs to the binding-protein-dependent transport system permease family. UgpAE subfamily. As to quaternary structure, the complex is composed of two ATP-binding proteins (UgpC), two transmembrane proteins (UgpA and UgpE) and a solute-binding protein (UgpB).

Its subcellular location is the cell inner membrane. Its function is as follows. Part of the ABC transporter complex UgpBAEC involved in sn-glycerol-3-phosphate (G3P) import. Probably responsible for the translocation of the substrate across the membrane. This Escherichia coli O157:H7 protein is sn-glycerol-3-phosphate transport system permease protein UgpE (ugpE).